The sequence spans 626 residues: Probable potassium transport system protein Kup 3 (626 aa).

The next 12 membrane-spanning stretches (helical) occupy residues 10–30, 51–71, 107–127, 141–161, 173–193, 216–236, 251–271, 293–313, 341–361, 371–391, 401–421, and 423–443; these read LATLTLAALGVVYGDIGTSPL, VLGILSLFFWSLIIVVTLKYV, VLLGLFGAALFYGDGIITPAI, PAFKPYILPITLITLIGLFIF, FGPVMVIWFAVIAVLGAAAIV, LLGFFALGAVVLCITGGEALY, WLGYVLPALLLNYFGQGALLL, LVALATVATVIASQAVISGAF, IYLPAINWMMLIAIIALVIEF, YGIAVTGTMLITNILAIAVAV, AMLGALPFICIDLGFFLANSV, and IADGGWFPLAFGLAVFILLTT.

It belongs to the HAK/KUP transporter (TC 2.A.72) family.

The protein localises to the cell inner membrane. It carries out the reaction K(+)(in) + H(+)(in) = K(+)(out) + H(+)(out). Transport of potassium into the cell. Likely operates as a K(+):H(+) symporter. In Dechloromonas aromatica (strain RCB), this protein is Probable potassium transport system protein Kup 3.